The chain runs to 437 residues: Chaperone SurA (437 aa).

The signal sequence occupies residues 1–22 (MKNWKFPLISTLLLLLTINVHA). PpiC domains follow at residues 173–274 (TVQY…KIDD) and 283–383 (VTEV…EVLE).

The protein resides in the periplasm. It catalyses the reaction [protein]-peptidylproline (omega=180) = [protein]-peptidylproline (omega=0). In terms of biological role, chaperone involved in the correct folding and assembly of outer membrane proteins. Recognizes specific patterns of aromatic residues and the orientation of their side chains, which are found more frequently in integral outer membrane proteins. May act in both early periplasmic and late outer membrane-associated steps of protein maturation. This is Chaperone SurA from Aliivibrio fischeri (strain ATCC 700601 / ES114) (Vibrio fischeri).